A 705-amino-acid polypeptide reads, in one-letter code: Elongation factor G (705 aa).

In terms of domain architecture, tr-type G spans 8–290 (ERYRNFGIMA…GVVHLLPSPA (283 aa)). GTP contacts are provided by residues 17 to 24 (AHIDAGKT), 88 to 92 (DTPGH), and 142 to 145 (NKMD). The segment at 290-309 (ADRPPVQGIDEDEKEDTRAA) is disordered.

Belongs to the TRAFAC class translation factor GTPase superfamily. Classic translation factor GTPase family. EF-G/EF-2 subfamily.

It is found in the cytoplasm. In terms of biological role, catalyzes the GTP-dependent ribosomal translocation step during translation elongation. During this step, the ribosome changes from the pre-translocational (PRE) to the post-translocational (POST) state as the newly formed A-site-bound peptidyl-tRNA and P-site-bound deacylated tRNA move to the P and E sites, respectively. Catalyzes the coordinated movement of the two tRNA molecules, the mRNA and conformational changes in the ribosome. This is Elongation factor G from Xanthomonas axonopodis pv. citri (strain 306).